The primary structure comprises 242 residues: tRNA pseudouridine synthase A (242 aa).

Aspartate 51 acts as the Nucleophile in catalysis. Tyrosine 107 lines the substrate pocket.

This sequence belongs to the tRNA pseudouridine synthase TruA family. Homodimer.

It catalyses the reaction uridine(38/39/40) in tRNA = pseudouridine(38/39/40) in tRNA. Formation of pseudouridine at positions 38, 39 and 40 in the anticodon stem and loop of transfer RNAs. This is tRNA pseudouridine synthase A from Helicobacter pylori (strain P12).